Consider the following 1177-residue polypeptide: MALANGGEDRMDDSSSGRTSLADSASLTNSSLRSGTSSQSIHTNDGTIRVFNFTTGEFERFHPNMLCEEICNTMCRQLGIAPIAQLLYGIREHSTSRRPSPLVRLDLTWCLPGERLNCQLVYCFRMRFRVPELDSQLELIDGRSHKFLYRQMRYDMRTEQIPEIRYPEHKDKSTGLAVMDMLIDDQEQSEDQQAMRSIEKLYKLYLPPSLWRAHSFFVGSKIREVFRSLKANSLSVERLKWHYVHQVSHLAPTYMTEQFTCTVQYLPNEEVARGSGPIGTSLAHSTSTLASSGSTNTLSTLTTNTNSVALGGSGKKAKRRSTSGGIDVYVRVFPHDSLEPGLKVARVTSEATLKWILVGAVEGIFMISKINDTSVRLEIVGLPKGYEMQFQTEKEMKSFISYLGIYIRLSSKWMQDLCHSYRTPSLEELSSLHCHGPIGGAYSLMKLHENGDKCGSYIVRECDREYNIYYIDINTKIMAKKTDQERCKTETFRIVRKDSQWKLSYNNGEHVLNSLHEVAHIIQADSPDRYRIPASKYDKPPLLLLLLPKNLKAKKTDLQLSEAELQRRNPQIFNPRTDLQWYPDSISLSDDGMMFTMRGDWIQQSPVKDVSVTMKMLKSDGNFMEFFRLAQTWSLIQSPQFLKLYGLTLADPYTMVMEYSRYGPLNKFLHSMPNVTLHCLLDLMHGLVRGMHYLEDNKIIHNYIRCSNLYVTKYDPNSYVLDAKISDPGYPRPYRESDSPWIPVKYYRNLQAAKTDQFAQLWAFATTIYEIFSRCKEDLSTLRQEQLLRQKNLDGNILKMLDQDICPAPIFETIMDGWSDDETKRFSHHDIFSRLNTIKAEILPNYMPPPEIATNGTGDETVIDRSDIPFLPFPRSNMLMVIPLTSECRVIYNMENMIGRGHYGTVYKGHLEFNDKDQPREQVAIKMLNTMQVSTDFHREIGIMRTLSHPNIVKFKYWAEKSHCIIMEYLQSGSFDIYLRFTAPNLNNPRLVSFALDIANGMKYLSDMGLIHRDLAARNILVDHNGDGDCVKISDFGLAQFANSDGYYYAKSKRDIPIRWYSPEAISTCRFSSYSDVWSYGVTLFEMFSRGEEPNLVPIQTSQEDFLNRLQSGERLNRPASCPDFIYDLMQLCWHATPRSRPSFATIVDIITREVATKVTHPTDGHQSPPNQPTDAE.

Positions 1 to 41 are disordered; the sequence is MALANGGEDRMDDSSSGRTSLADSASLTNSSLRSGTSSQSI. Positions 16–41 are enriched in polar residues; that stretch reads SGRTSLADSASLTNSSLRSGTSSQSI. 2 positions are modified to phosphoserine: serine 40 and serine 321. The region spanning 46–414 is the FERM domain; that stretch reads GTIRVFNFTT…IYIRLSSKWM (369 aa). Residues 433 to 539 enclose the SH2; atypical domain; that stretch reads HCHGPIGGAY…YRIPASKYDK (107 aa). 2 Protein kinase domains span residues 582-843 and 892-1164; these read YPDS…AEIL and YNME…HPTD. ATP is bound by residues 898–906 and lysine 926; that span reads IGRGHYGTV. The active-site Proton acceptor is the aspartate 1014. A phosphotyrosine; by autocatalysis mark is found at tyrosine 1047 and tyrosine 1048. Residues 1158–1177 are disordered; that stretch reads KVTHPTDGHQSPPNQPTDAE.

The protein belongs to the protein kinase superfamily. Tyr protein kinase family. JAK subfamily. Forms a complex with Hsp83 and piwi; probably Hop mediates the interaction between piwi and Hsp83.

The protein resides in the endomembrane system. It carries out the reaction L-tyrosyl-[protein] + ATP = O-phospho-L-tyrosyl-[protein] + ADP + H(+). Functionally, tyrosine kinase of the non-receptor type, phosphorylates the marelle protein. Required maternally for the establishment of the normal array of embryonic segments: involved in the control of pair-rule gene transcription in a stripe-specific manner. Together with Hsp83 and piwi, mediates canalization, also known as developmental robustness, likely via epigenetic silencing of existing genetic variants and suppression of transposon-induced new genetic variation. This Drosophila melanogaster (Fruit fly) protein is Tyrosine-protein kinase hopscotch (hop).